Consider the following 328-residue polypeptide: Eukaryotic translation initiation factor 3 subunit I (328 aa).

WD repeat units lie at residues 8–49, 50–89, 146–185, 191–230, and 288–327; these read GHER…GTYR, GHNG…ELFT, DGKK…LLKQ, GHKK…LLKT, and GHFG…FNIK.

It belongs to the eIF-3 subunit I family. Component of the eukaryotic translation initiation factor 3 (eIF-3) complex.

The protein resides in the cytoplasm. Its function is as follows. Component of the eukaryotic translation initiation factor 3 (eIF-3) complex, which is involved in protein synthesis of a specialized repertoire of mRNAs and, together with other initiation factors, stimulates binding of mRNA and methionyl-tRNAi to the 40S ribosome. The eIF-3 complex specifically targets and initiates translation of a subset of mRNAs involved in cell proliferation. The polypeptide is Eukaryotic translation initiation factor 3 subunit I (TIF3I1) (Arabidopsis thaliana (Mouse-ear cress)).